The sequence spans 644 residues: uncharacterized protein (644 aa).

254-261 (GKMGAGKS) is a binding site for ATP.

This is an uncharacterized protein from Bacillus anthracis.